The following is a 426-amino-acid chain: ORC1-type DNA replication protein 1 (426 aa).

ATP-binding positions include 62–66, Tyr211, and Arg223; that span reads VGKTL.

Belongs to the CDC6/cdc18 family.

Involved in regulation of DNA replication. The protein is ORC1-type DNA replication protein 1 (cdc6a) of Haloarcula marismortui (strain ATCC 43049 / DSM 3752 / JCM 8966 / VKM B-1809) (Halobacterium marismortui).